Reading from the N-terminus, the 170-residue chain is Macro domain-containing protein DR_2288 (170 aa).

In terms of domain architecture, Macro spans 1-170; it reads MPLELVQGDI…HVFERALAQL (170 aa).

This sequence belongs to the MacroD-type family.

The protein is Macro domain-containing protein DR_2288 of Deinococcus radiodurans (strain ATCC 13939 / DSM 20539 / JCM 16871 / CCUG 27074 / LMG 4051 / NBRC 15346 / NCIMB 9279 / VKM B-1422 / R1).